The sequence spans 406 residues: Argininosuccinate synthase (406 aa).

Residues 11–19 (AYSGGLDTS) and Ala-38 each bind ATP. Positions 91 and 96 each coordinate L-citrulline. An ATP-binding site is contributed by Gly-121. L-aspartate is bound by residues Thr-123, Asn-127, and Asp-128. Asn-127 contacts L-citrulline. L-citrulline is bound by residues Arg-131, Ser-181, Ser-190, Glu-266, and Tyr-278.

This sequence belongs to the argininosuccinate synthase family. Type 1 subfamily. In terms of assembly, homotetramer.

It is found in the cytoplasm. The catalysed reaction is L-citrulline + L-aspartate + ATP = 2-(N(omega)-L-arginino)succinate + AMP + diphosphate + H(+). Its pathway is amino-acid biosynthesis; L-arginine biosynthesis; L-arginine from L-ornithine and carbamoyl phosphate: step 2/3. This chain is Argininosuccinate synthase, found in Campylobacter hominis (strain ATCC BAA-381 / DSM 21671 / CCUG 45161 / LMG 19568 / NCTC 13146 / CH001A).